A 362-amino-acid polypeptide reads, in one-letter code: METTVRKQKKNVETKKPSIYSLQIHEMQDWLKEQGEPKFRAGQIFDWLYKKRVKNYEDMSNLSKGLRDKLSNSFDITTLNTLVKQTSSDGTIKFLFQLYDGYSIETVLMRHEYGNSICVTTQVGCRIGCTFCASTLGGLKRNLEAGEIVAQVVEVQRALDETEERVSSLVVMGIGEPFDNYDNLMGFLRITNHEKGLHIGARHMTVSTSGIIPKIYKFAEEELQINFAISLHAPNSELRSKLMPINRAYKLPDLMEAIKYYVNRTGRRITFEYGLFGGENDQVEHAEELAALLKGVKCHVNLIPVNYVPERDYVRTPREQIFLFEKTLKDRGVNVTIRREQGHDIDAACGQLRAKERKEETR.

Glu-105 serves as the catalytic Proton acceptor. The 234-residue stretch at 111 to 344 (HEYGNSICVT…VTIRREQGHD (234 aa)) folds into the Radical SAM core domain. Cys-118 and Cys-349 are joined by a disulfide. Cys-125, Cys-129, and Cys-132 together coordinate [4Fe-4S] cluster. S-adenosyl-L-methionine contacts are provided by residues 175 to 176 (GE), Ser-207, 230 to 232 (SLH), and Asn-306. The active-site S-methylcysteine intermediate is Cys-349.

Belongs to the radical SAM superfamily. RlmN family. [4Fe-4S] cluster serves as cofactor.

The protein localises to the cytoplasm. It carries out the reaction adenosine(2503) in 23S rRNA + 2 reduced [2Fe-2S]-[ferredoxin] + 2 S-adenosyl-L-methionine = 2-methyladenosine(2503) in 23S rRNA + 5'-deoxyadenosine + L-methionine + 2 oxidized [2Fe-2S]-[ferredoxin] + S-adenosyl-L-homocysteine. It catalyses the reaction adenosine(37) in tRNA + 2 reduced [2Fe-2S]-[ferredoxin] + 2 S-adenosyl-L-methionine = 2-methyladenosine(37) in tRNA + 5'-deoxyadenosine + L-methionine + 2 oxidized [2Fe-2S]-[ferredoxin] + S-adenosyl-L-homocysteine. In terms of biological role, specifically methylates position 2 of adenine 2503 in 23S rRNA and position 2 of adenine 37 in tRNAs. The chain is Probable dual-specificity RNA methyltransferase RlmN from Bacillus cereus (strain G9842).